The primary structure comprises 243 residues: Cell division protein ZipA (243 aa).

Over 1-4 (MSDM) the chain is Periplasmic. A helical transmembrane segment spans residues 5 to 25 (AMIRIGILIAGLLLVAAIFLF). Residues 26–243 (GRPKKSPQGR…APPLTKSPRW (218 aa)) lie on the Cytoplasmic side of the membrane. Residues 30–89 (KSPQGRRVDKGEGQPRERREPVISSEFGAEGDAAERAEGVEQSELNLEGQDASGGNEVGK) are disordered. Residues 35–50 (RRVDKGEGQPRERREP) show a composition bias toward basic and acidic residues.

It belongs to the ZipA family. As to quaternary structure, interacts with FtsZ via their C-terminal domains.

It is found in the cell inner membrane. Essential cell division protein that stabilizes the FtsZ protofilaments by cross-linking them and that serves as a cytoplasmic membrane anchor for the Z ring. Also required for the recruitment to the septal ring of downstream cell division proteins. The sequence is that of Cell division protein ZipA from Xanthomonas axonopodis pv. citri (strain 306).